We begin with the raw amino-acid sequence, 252 residues long: Biosynthetic peptidoglycan transglycosylase (252 aa).

Residues Ile23–Leu43 traverse the membrane as a helical segment.

Belongs to the glycosyltransferase 51 family.

The protein localises to the cell inner membrane. It catalyses the reaction [GlcNAc-(1-&gt;4)-Mur2Ac(oyl-L-Ala-gamma-D-Glu-L-Lys-D-Ala-D-Ala)](n)-di-trans,octa-cis-undecaprenyl diphosphate + beta-D-GlcNAc-(1-&gt;4)-Mur2Ac(oyl-L-Ala-gamma-D-Glu-L-Lys-D-Ala-D-Ala)-di-trans,octa-cis-undecaprenyl diphosphate = [GlcNAc-(1-&gt;4)-Mur2Ac(oyl-L-Ala-gamma-D-Glu-L-Lys-D-Ala-D-Ala)](n+1)-di-trans,octa-cis-undecaprenyl diphosphate + di-trans,octa-cis-undecaprenyl diphosphate + H(+). It participates in cell wall biogenesis; peptidoglycan biosynthesis. Peptidoglycan polymerase that catalyzes glycan chain elongation from lipid-linked precursors. This is Biosynthetic peptidoglycan transglycosylase from Cupriavidus pinatubonensis (strain JMP 134 / LMG 1197) (Cupriavidus necator (strain JMP 134)).